The chain runs to 418 residues: Hepatic and glial cell adhesion molecule (418 aa).

The signal sequence occupies residues 1 to 33 (MKREREAPSRAFSALRLAPFVYLLLIQTEPLEG). Residues 34–141 (VNITSPVRLI…TGEKTINLTV (108 aa)) form the Ig-like V-type domain. The Extracellular segment spans residues 34–240 (VNITSPVRLI…VKITVYRRSS (207 aa)). Asn-35, Asn-138, Asn-167, and Asn-189 each carry an N-linked (GlcNAc...) asparagine glycan. An Ig-like C2-type domain is found at 148-234 (PQVLVASTTV…QGRSPPVKIT (87 aa)). Cys-168 and Cys-217 are joined by a disulfide. The chain crosses the membrane as a helical span at residues 241-261 (LYIILSTGGIFLLVTLVTVCA). Topologically, residues 262-418 (CWKPSKKSGK…DEAGPVEISA (157 aa)) are cytoplasmic. Positions 271-418 (KKRKLEKQNS…DEAGPVEISA (148 aa)) are disordered. A Phosphoserine modification is found at Ser-280. Positions 287–308 (SDDRLKPEADTLPRSGEQERKN) are enriched in basic and acidic residues. Residues Ser-352 and Ser-379 each carry the phosphoserine modification. Residues 385–400 (GSPGRSRSASRTLRTA) show a composition bias toward low complexity.

Homodimer. Dimer formation occurs predominantly through cis interactions on the cell surface. Part of a complex containing MLC1, TRPV4, AQP4 and ATP1B1. Interacts with CLCN2. Post-translationally, N-glycosylated.

It is found in the cytoplasm. Its subcellular location is the cell membrane. In terms of biological role, involved in regulating cell motility and cell-matrix interactions. May inhibit cell growth through suppression of cell proliferation. In glia, associates and targets CLCN2 at astrocytic processes and myelinated fiber tracts where it may regulate transcellular chloride flux involved in neuron excitability. In Bos taurus (Bovine), this protein is Hepatic and glial cell adhesion molecule.